The sequence spans 922 residues: Putative ATP-dependent helicase/translocase YwqA (922 aa).

Residues 462-625 enclose the Helicase ATP-binding domain; sequence LFLRESGFGA…WSIFDFMNKG (164 aa). 475 to 482 is an ATP binding site; the sequence is DDMGLGKT. Positions 576–579 match the DEAQ box motif; sequence DEAQ. The 155-residue stretch at 753 to 907 folds into the Helicase C-terminal domain; that stretch reads KLLELMTAIR…QSENWITELS (155 aa).

The protein belongs to the SNF2/RAD54 helicase family. In terms of assembly, interacts with the RNA polymerase core.

In Bacillus subtilis (strain 168), this protein is Putative ATP-dependent helicase/translocase YwqA (ywqA).